The following is a 209-amino-acid chain: MRPLTADLLLRAYASGVFPMARSRDENRLYWVDPEQRGILPLEAFHVPKSLRRTLRSERFDIRCDTAFEAVMRACGEATADRPETWINEQIIRLFVELFELGLGHSVEVWQDGELVGGLYGLALGAAFFGESMFSRRTDASKVALVHLVARLRHGGFRLLDTQFVTEHLKQFGAQEISRAAYQDRLADALAETAWFDRNATVAWEVALV.

The protein belongs to the L/F-transferase family.

It localises to the cytoplasm. It catalyses the reaction N-terminal L-lysyl-[protein] + L-leucyl-tRNA(Leu) = N-terminal L-leucyl-L-lysyl-[protein] + tRNA(Leu) + H(+). The catalysed reaction is N-terminal L-arginyl-[protein] + L-leucyl-tRNA(Leu) = N-terminal L-leucyl-L-arginyl-[protein] + tRNA(Leu) + H(+). The enzyme catalyses L-phenylalanyl-tRNA(Phe) + an N-terminal L-alpha-aminoacyl-[protein] = an N-terminal L-phenylalanyl-L-alpha-aminoacyl-[protein] + tRNA(Phe). In terms of biological role, functions in the N-end rule pathway of protein degradation where it conjugates Leu, Phe and, less efficiently, Met from aminoacyl-tRNAs to the N-termini of proteins containing an N-terminal arginine or lysine. This chain is Leucyl/phenylalanyl-tRNA--protein transferase, found in Paramagnetospirillum magneticum (strain ATCC 700264 / AMB-1) (Magnetospirillum magneticum).